The sequence spans 470 residues: Asparagine--tRNA ligase (470 aa).

It belongs to the class-II aminoacyl-tRNA synthetase family. Homodimer.

The protein resides in the cytoplasm. The enzyme catalyses tRNA(Asn) + L-asparagine + ATP = L-asparaginyl-tRNA(Asn) + AMP + diphosphate + H(+). This is Asparagine--tRNA ligase from Blochmanniella pennsylvanica (strain BPEN).